A 263-amino-acid chain; its full sequence is Eukaryotic translation initiation factor 3 subunit J-B (263 aa).

Residues 1-13 (MAAAAAAAAAAAA) show a composition bias toward low complexity. The tract at residues 1 to 115 (MAAAAAAAAA…EPEESKVLTP (115 aa)) is disordered. N-acetylalanine is present on alanine 2. The interval 6-74 (AAAAAAAAGD…KEEAEVKPEV (69 aa)) is sufficient for interaction with EIF3B. Phosphoserine is present on residues serine 16, serine 18, and serine 25. Over residues 45-66 (EGEDEDEDVKDNWDDDDDENKE) the composition is skewed to acidic residues. Residues 67–111 (EAEVKPEVKISEKKKIAEKIKEKERQQKKRQEEIKKRLEEPEESK) are compositionally biased toward basic and acidic residues. Positions 75 to 140 (KISEKKKIAE…ESDLELAKET (66 aa)) form a coiled coil. Lysine 111 participates in a covalent cross-link: Glycyl lysine isopeptide (Lys-Gly) (interchain with G-Cter in SUMO2). Phosphothreonine is present on threonine 114. Serine 132 carries the post-translational modification Phosphoserine. The promotes stable association with the 40S ribosome stretch occupies residues 248-263 (YGGYEGGYVQDYEDFM). Residue tyrosine 259 is modified to Phosphotyrosine.

It belongs to the eIF-3 subunit J family. Component of the eukaryotic translation initiation factor 3 (eIF-3) complex, which is composed of 13 subunits: EIF3A, EIF3B, EIF3C, EIF3D, EIF3E, EIF3F, EIF3G, EIF3H, EIF3I, EIF3J, EIF3K, EIF3L and EIF3M. The eIF-3 complex appears to include 3 stable modules: module A is composed of EIF3A, EIF3B, EIF3G and EIF3I; module B is composed of EIF3F, EIF3H, and EIF3M; and module C is composed of EIF3C, EIF3D, EIF3E, EIF3K and EIF3L. EIF3C of module C binds EIF3B of module A and EIF3H of module B, thereby linking the three modules. EIF3J is a labile subunit that binds to the eIF-3 complex via EIF3B. The eIF-3 complex interacts with RPS6KB1 under conditions of nutrient depletion. Mitogenic stimulation leads to binding and activation of a complex composed of MTOR and RPTOR, leading to phosphorylation and release of RPS6KB1 and binding of EIF4B to eIF-3. In terms of processing, phosphorylated. Phosphorylation is enhanced upon serum stimulation.

It localises to the cytoplasm. Component of the eukaryotic translation initiation factor 3 (eIF-3) complex, which is required for several steps in the initiation of protein synthesis. The eIF-3 complex associates with the 40S ribosome and facilitates the recruitment of eIF-1, eIF-1A, eIF-2:GTP:methionyl-tRNAi and eIF-5 to form the 43S pre-initiation complex (43S PIC). The eIF-3 complex stimulates mRNA recruitment to the 43S PIC and scanning of the mRNA for AUG recognition. The eIF-3 complex is also required for disassembly and recycling of post-termination ribosomal complexes and subsequently prevents premature joining of the 40S and 60S ribosomal subunits prior to initiation. The eIF-3 complex specifically targets and initiates translation of a subset of mRNAs involved in cell proliferation, including cell cycling, differentiation and apoptosis, and uses different modes of RNA stem-loop binding to exert either translational activation or repression. This subunit binds directly within the mRNA entry channel of the 40S ribosome to the aminoacyl (A) site. It may regulate the interaction between the 43S PIC and mRNA. The chain is Eukaryotic translation initiation factor 3 subunit J-B (Eif3j2) from Mus musculus (Mouse).